Reading from the N-terminus, the 101-residue chain is Large ribosomal subunit protein uL24 (101 aa).

It belongs to the universal ribosomal protein uL24 family. As to quaternary structure, part of the 50S ribosomal subunit.

Functionally, one of two assembly initiator proteins, it binds directly to the 5'-end of the 23S rRNA, where it nucleates assembly of the 50S subunit. Its function is as follows. One of the proteins that surrounds the polypeptide exit tunnel on the outside of the subunit. The chain is Large ribosomal subunit protein uL24 from Streptococcus uberis (strain ATCC BAA-854 / 0140J).